The primary structure comprises 465 residues: Cysteine--tRNA ligase (465 aa).

Cys-27 serves as a coordination point for Zn(2+). Residues Pro-29–Asn-39 carry the 'HIGH' region motif. Zn(2+) contacts are provided by Cys-207, His-232, and Glu-236. A 'KMSKS' region motif is present at residues Lys-264–Ser-268. Lys-267 provides a ligand contact to ATP.

It belongs to the class-I aminoacyl-tRNA synthetase family. Monomer. The cofactor is Zn(2+).

Its subcellular location is the cytoplasm. It carries out the reaction tRNA(Cys) + L-cysteine + ATP = L-cysteinyl-tRNA(Cys) + AMP + diphosphate. In Clostridium botulinum (strain ATCC 19397 / Type A), this protein is Cysteine--tRNA ligase.